The chain runs to 50 residues: uncharacterized protein (50 aa).

Residues 28 to 50 (SKLSPVTNGGKTIGKSNKVSKND) form a disordered region. The segment covering 29–50 (KLSPVTNGGKTIGKSNKVSKND) has biased composition (polar residues).

This is an uncharacterized protein from Haemophilus influenzae (strain ATCC 51907 / DSM 11121 / KW20 / Rd).